The sequence spans 430 residues: Aspartate aminotransferase, mitochondrial (430 aa).

The transit peptide at 1 to 29 (MALLHSGRVLSGVASAFHPGLAAAASARA) directs the protein to the mitochondrion. Thr-48 carries the post-translational modification Phosphothreonine. Lys-59 carries the N6-acetyllysine modification. Gly-65 lines the substrate pocket. Lys-73 carries the post-translational modification N6-acetyllysine; alternate. N6-succinyllysine; alternate is present on Lys-73. Lys-82 bears the N6-acetyllysine mark. An N6-acetyllysine; alternate modification is found at Lys-90. N6-succinyllysine; alternate is present on Lys-90. Tyr-96 carries the 3'-nitrotyrosine; alternate modification. Tyr-96 bears the Phosphotyrosine; alternate mark. Residues Lys-107, Lys-122, and Lys-159 each carry the N6-acetyllysine; alternate modification. 3 positions are modified to N6-succinyllysine; alternate: Lys-107, Lys-122, and Lys-159. Trp-162 provides a ligand contact to substrate. Lys-185 carries the post-translational modification N6-acetyllysine; alternate. An N6-succinyllysine; alternate modification is found at Lys-185. Position 215 (Asn-215) interacts with substrate. An N6-succinyllysine modification is found at Lys-227. Lys-234 carries the post-translational modification N6-acetyllysine. An N6-acetyllysine; alternate mark is found at Lys-279 and Lys-296. Lys-279 carries the post-translational modification N6-(pyridoxal phosphate)lysine; alternate. At Lys-296 the chain carries N6-succinyllysine; alternate. Residue Lys-302 is modified to N6-acetyllysine. Lys-309 is modified (N6-acetyllysine; alternate). Lys-309 is subject to N6-succinyllysine; alternate. Asymmetric dimethylarginine is present on Arg-313. An N6-acetyllysine modification is found at Lys-345. Lys-363 carries the post-translational modification N6-acetyllysine; alternate. Lys-363 bears the N6-succinyllysine; alternate mark. An N6-acetyllysine mark is found at Lys-364 and Lys-387. An N6-acetyllysine; alternate mark is found at Lys-396 and Lys-404. 2 positions are modified to N6-succinyllysine; alternate: Lys-396 and Lys-404. Substrate is bound at residue Arg-407.

Belongs to the class-I pyridoxal-phosphate-dependent aminotransferase family. Homodimer. The cofactor is pyridoxal 5'-phosphate.

The protein resides in the mitochondrion matrix. The protein localises to the cell membrane. It catalyses the reaction L-aspartate + 2-oxoglutarate = oxaloacetate + L-glutamate. It carries out the reaction L-kynurenine + 2-oxoglutarate = kynurenate + L-glutamate + H2O. Functionally, catalyzes the irreversible transamination of the L-tryptophan metabolite L-kynurenine to form kynurenic acid (KA). As a member of the malate-aspartate shuttle, it has a key role in the intracellular NAD(H) redox balance. Is important for metabolite exchange between mitochondria and cytosol, and for amino acid metabolism. Facilitates cellular uptake of long-chain free fatty acids. The polypeptide is Aspartate aminotransferase, mitochondrial (GOT2) (Sus scrofa (Pig)).